Here is a 183-residue protein sequence, read N- to C-terminus: Large ribosomal subunit protein uL6 (183 aa).

This sequence belongs to the universal ribosomal protein uL6 family. Part of the 50S ribosomal subunit.

In terms of biological role, this protein binds to the 23S rRNA, and is important in its secondary structure. It is located near the subunit interface in the base of the L7/L12 stalk, and near the tRNA binding site of the peptidyltransferase center. This Chlamydia muridarum (strain MoPn / Nigg) protein is Large ribosomal subunit protein uL6.